A 696-amino-acid chain; its full sequence is D-(-)-3-hydroxybutyrate oligomer hydrolase (696 aa).

Positions 1–20 are cleaved as a signal peptide; the sequence is MTRLGWGRRMVFGAALAAVA. Residue Ser-309 is the Charge relay system of the active site.

Belongs to the D-(-)-3-hydroxybutyrate oligomer hydrolase family.

It is found in the secreted. It carries out the reaction (3R)-hydroxybutanoate dimer + H2O = 2 (R)-3-hydroxybutanoate + H(+). It participates in lipid metabolism; butanoate metabolism. Functionally, participates in the degradation of poly-3-hydroxybutyrate (PHB). It works downstream of poly(3-hydroxybutyrate) depolymerase, hydrolyzing D(-)-3-hydroxybutyrate oligomers of various length (3HB-oligomers) into 3HB-monomers. This chain is D-(-)-3-hydroxybutyrate oligomer hydrolase, found in Burkholderia lata (strain ATCC 17760 / DSM 23089 / LMG 22485 / NCIMB 9086 / R18194 / 383).